The primary structure comprises 553 residues: Phospholipase B-like 1 (553 aa).

A signal peptide spans 1-38 (MTRGGPGGRPGLPQPPPLLLLLLLLPLLLVTAEPPKPA). Residue N71 is glycosylated (N-linked (GlcNAc...) (high mannose) asparagine; alternate). N71 is a glycosylation site (N-linked (GlcNAc...) (hybrid) asparagine; alternate). Positions 209 to 227 (LSPTKNGSLKVFKRWDMGH) are cleaved as a propeptide — removed in mature form. N-linked (GlcNAc...) (high mannose) asparagine; alternate glycans are attached at residues N308 and N366. Residues N308 and N366 are each glycosylated (N-linked (GlcNAc...) (hybrid) asparagine; alternate). A glycan (N-linked (GlcNAc...) asparagine) is linked at N411. 2 cysteine pairs are disulfide-bonded: C470-C475 and C474-C489. N526 carries N-linked (GlcNAc...) (high mannose) asparagine; alternate glycosylation. N526 carries N-linked (GlcNAc...) (hybrid) asparagine; alternate glycosylation.

This sequence belongs to the phospholipase B-like family. In terms of assembly, may form a homodimer, each monomer is composed of a chain A and a chain B. In terms of processing, the maturation cleavages that produces chains A and B are required to open the putative substrate binding pocket. Both chains A and B remain associated in the mature protein. In terms of tissue distribution, expressed in neutrophils and monocytes.

The protein localises to the lysosome. Functionally, in view of the small size of the putative binding pocket, it has been proposed that it may act as an amidase or a peptidase. Exhibits a weak phospholipase activity, acting on various phospholipids, including phosphatidylcholine, phosphatidylinositol, phosphatidylethanolamine and lysophospholipids. In Homo sapiens (Human), this protein is Phospholipase B-like 1 (PLBD1).